The primary structure comprises 271 residues: MATH domain and coiled-coil domain-containing protein At3g27040 (271 aa).

The region spanning 7-133 is the MATH domain; it reads DKKFTWVIKN…NGEVKIVAEV (127 aa). The stretch at 230-271 forms a coiled coil; it reads KLDWLEKKLKETGKSRLQEIEEDLKDLKVKCADMDALLDFLR.

In Arabidopsis thaliana (Mouse-ear cress), this protein is MATH domain and coiled-coil domain-containing protein At3g27040.